Consider the following 412-residue polypeptide: Subtilisin-like protease 6 (412 aa).

Positions 1 to 20 are cleaved as a signal peptide; it reads MGFITKAIPIVLAALSTVNG. Residues 21–127 constitute a propeptide that is removed on maturation; sequence AKILEAGPHA…VRTSTNGTNL (107 aa). The 85-residue stretch at 36-120 folds into the Inhibitor I9 domain; it reads KYIVVMKREV…YIEPDFVVRT (85 aa). Asparagine 123 and asparagine 126 each carry an N-linked (GlcNAc...) asparagine glycan. The Peptidase S8 domain maps to 135 to 412; the sequence is SWGLARVSSK…SKLIYNGSGK (278 aa). Residues aspartate 167 and histidine 198 each act as charge relay system in the active site. N-linked (GlcNAc...) asparagine glycosylation is found at asparagine 252 and asparagine 264. The active-site Charge relay system is serine 358. An N-linked (GlcNAc...) asparagine glycan is attached at asparagine 408.

This sequence belongs to the peptidase S8 family.

Its subcellular location is the secreted. Its function is as follows. Secreted subtilisin-like serine protease with keratinolytic activity that contributes to pathogenicity. The protein is Subtilisin-like protease 6 (SUB6) of Trichophyton tonsurans (Scalp ringworm fungus).